Consider the following 473-residue polypeptide: Vasculin (473 aa).

Disordered regions lie at residues 1-25 (MAQH…SSLN), 45-169 (RRHN…KSRA), and 191-342 (VGNL…QERD). S49 is subject to Phosphoserine. R87 is subject to Omega-N-methylarginine. Positions 93 to 107 (GSSRSRSSIFHSGKS) are enriched in low complexity. Residues 119–133 (ETGRKEDKRERKQFE) are compositionally biased toward basic and acidic residues. 2 stretches are compositionally biased toward polar residues: residues 194–204 (LPSQPVKNGTG) and 251–286 (AFKS…QQPR). Phosphoserine occurs at positions 274, 276, 322, and 381. Positions 293–329 (MRTDKKSEFLKALKRDRVEEEHEDESRAGSEKDDDSF) are enriched in basic and acidic residues. The disordered stretch occupies residues 444–473 (GPWKNSTFKPTTENDDTETSSSDTSDDDDV). Acidic residues predominate over residues 456 to 473 (ENDDTETSSSDTSDDDDV).

It belongs to the vasculin family. In terms of assembly, interacts with GTF2B, GTF2F2, RNA polymerase II and TBP.

Its subcellular location is the nucleus. Functionally, functions as a GC-rich promoter-specific transactivating transcription factor. This Pongo abelii (Sumatran orangutan) protein is Vasculin (GPBP1).